The chain runs to 227 residues: Uracil-DNA glycosylase (227 aa).

Asp64 acts as the Proton acceptor in catalysis.

It belongs to the uracil-DNA glycosylase (UDG) superfamily. UNG family.

It localises to the cytoplasm. The catalysed reaction is Hydrolyzes single-stranded DNA or mismatched double-stranded DNA and polynucleotides, releasing free uracil.. Excises uracil residues from the DNA which can arise as a result of misincorporation of dUMP residues by DNA polymerase or due to deamination of cytosine. This chain is Uracil-DNA glycosylase, found in Sodalis glossinidius (strain morsitans).